The chain runs to 413 residues: uncharacterized protein (413 aa).

Residues 14–34 form a helical membrane-spanning segment; that stretch reads LLFFTVVIIPIFYYIYKIVYL. Asn-46, Asn-55, Asn-103, Asn-171, Asn-179, Asn-184, Asn-220, Asn-252, Asn-260, Asn-273, Asn-362, Asn-366, Asn-374, Asn-378, Asn-393, and Asn-408 each carry an N-linked (GlcNAc...) asparagine; by host glycan. Residues 250–263 are compositionally biased toward low complexity; it reads TKNSTETNSDNNSE. The interval 250–277 is disordered; sequence TKNSTETNSDNNSEIVSETNSETNYSTP. A compositionally biased stretch (polar residues) spans 264-277; the sequence is IVSETNSETNYSTP.

Its subcellular location is the membrane. This is an uncharacterized protein from Acanthamoeba polyphaga (Amoeba).